The primary structure comprises 169 residues: Cell division inhibitor SulA (169 aa).

Residues 106-112 (ALRTGNY) form a ftsZ binding region. The segment at 162-169 (KIHSNLYH) is lon protease binding.

Belongs to the SulA family. Interacts with FtsZ. Is rapidly cleaved and degraded by the Lon protease once DNA damage is repaired.

Functionally, component of the SOS system and an inhibitor of cell division. Accumulation of SulA causes rapid cessation of cell division and the appearance of long, non-septate filaments. In the presence of GTP, binds a polymerization-competent form of FtsZ in a 1:1 ratio, thus inhibiting FtsZ polymerization and therefore preventing it from participating in the assembly of the Z ring. This mechanism prevents the premature segregation of damaged DNA to daughter cells during cell division. The protein is Cell division inhibitor SulA of Salmonella agona (strain SL483).